The chain runs to 199 residues: UPF0637 protein LVIS_1261 (199 aa).

The protein belongs to the UPF0637 family.

This chain is UPF0637 protein LVIS_1261, found in Levilactobacillus brevis (strain ATCC 367 / BCRC 12310 / CIP 105137 / JCM 1170 / LMG 11437 / NCIMB 947 / NCTC 947) (Lactobacillus brevis).